Here is a 126-residue protein sequence, read N- to C-terminus: S-adenosylmethionine decarboxylase proenzyme (126 aa).

Catalysis depends on Ser-63, which acts as the Schiff-base intermediate with substrate; via pyruvic acid. The residue at position 63 (Ser-63) is a Pyruvic acid (Ser); by autocatalysis. His-68 serves as the catalytic Proton acceptor; for processing activity. Cys-83 functions as the Proton donor; for catalytic activity in the catalytic mechanism.

This sequence belongs to the prokaryotic AdoMetDC family. Type 1 subfamily. As to quaternary structure, heterotetramer of two alpha and two beta chains arranged as a dimer of alpha/beta heterodimers. Requires pyruvate as cofactor. Post-translationally, is synthesized initially as an inactive proenzyme. Formation of the active enzyme involves a self-maturation process in which the active site pyruvoyl group is generated from an internal serine residue via an autocatalytic post-translational modification. Two non-identical subunits are generated from the proenzyme in this reaction, and the pyruvate is formed at the N-terminus of the alpha chain, which is derived from the carboxyl end of the proenzyme. The post-translation cleavage follows an unusual pathway, termed non-hydrolytic serinolysis, in which the side chain hydroxyl group of the serine supplies its oxygen atom to form the C-terminus of the beta chain, while the remainder of the serine residue undergoes an oxidative deamination to produce ammonia and the pyruvoyl group blocking the N-terminus of the alpha chain.

It carries out the reaction S-adenosyl-L-methionine + H(+) = S-adenosyl 3-(methylsulfanyl)propylamine + CO2. It functions in the pathway amine and polyamine biosynthesis; S-adenosylmethioninamine biosynthesis; S-adenosylmethioninamine from S-adenosyl-L-methionine: step 1/1. Functionally, catalyzes the decarboxylation of S-adenosylmethionine to S-adenosylmethioninamine (dcAdoMet), the propylamine donor required for the synthesis of the polyamines spermine and spermidine from the diamine putrescine. This Clostridium tetani (strain Massachusetts / E88) protein is S-adenosylmethionine decarboxylase proenzyme.